Reading from the N-terminus, the 1138-residue chain is uncharacterized protein (1138 aa).

An N-terminal signal peptide occupies residues 1-28; that stretch reads MKLFPRSILIILVLSFALNLGLVTKTHA. The next 7 membrane-spanning stretches (helical) occupy residues 331-351, 359-379, 392-412, 494-514, 520-540, 554-574, and 699-719; these read IVTA…LLAG, YINF…INIT, MIQW…SWVM, MLVS…AFMV, CMIS…MFLF, MISF…MFSV, and IKNI…MYNF. The segment covering 775–784 has biased composition (gly residues); sequence DLKAGQGGGV. Disordered stretches follow at residues 775–914, 958–977, and 995–1071; these read DLKA…KGTG, GGGR…RTNA, and ERDN…KQIR. Low complexity predominate over residues 801-830; the sequence is AASGGTSAPTVTTPTASSSVATSSPKTVSS. Residues 838–852 are compositionally biased toward pro residues; the sequence is TPPPAPSEAVSPPPA. A compositionally biased stretch (polar residues) spans 854 to 869; sequence IRTSISTPAPQSNIET. Basic and acidic residues-rich tracts occupy residues 875 to 888, 961 to 977, 995 to 1032, and 1058 to 1071; these read IIRD…KEID, RIRD…RTNA, ERDN…RKEN, and LKEH…KQIR.

The protein belongs to the TrbL/VirB6 family.

The protein localises to the cell membrane. This is an uncharacterized protein from Rickettsia felis (strain ATCC VR-1525 / URRWXCal2) (Rickettsia azadi).